The following is a 219-amino-acid chain: MSGLFGPLSRPGPLPSAWLFLLLLGPSSVLGISFHLPVNSRKCLREEIHKDLLVTGAYEITDQSGGAGGLRTHLKITDSAGHILYAKEDATKGKFAFTTEDYDMFEVCFESKGTGRIPDQLVILDMKHGVEAKNYEEIAKVEKLKPLEVELRRLEDLSESIVNDFAYMKKREEEMRDTNESTNTRVLYFSIFSMFCLIGLATWQVFYLRRFFKAKKLIE.

Positions 1 to 31 are cleaved as a signal peptide; sequence MSGLFGPLSRPGPLPSAWLFLLLLGPSSVLG. The segment at 1 to 142 is required for interaction with STX17; that stretch reads MSGLFGPLSR…KNYEEIAKVE (142 aa). The Lumenal segment spans residues 32-185; that stretch reads ISFHLPVNSR…RDTNESTNTR (154 aa). In terms of domain architecture, GOLD spans 41 to 193; sequence RKCLREEIHK…TRVLYFSIFS (153 aa). A required for TMED10 and TMED2 cis-Golgi network localization region spans residues 147-178; sequence LEVELRRLEDLSESIVNDFAYMKKREEEMRDT. A dimethylated arginine mark is found at Arg-171 and Arg-176. Asn-179 carries N-linked (GlcNAc...) asparagine glycosylation. The chain crosses the membrane as a helical span at residues 186 to 206; it reads VLYFSIFSMFCLIGLATWQVF. Residues 204 to 219 form an interaction with COPG1 region; that stretch reads QVFYLRRFFKAKKLIE. Over 207 to 219 the chain is Cytoplasmic; that stretch reads YLRRFFKAKKLIE. An interaction with ARF1 and IL1B region spans residues 207-219; that stretch reads YLRRFFKAKKLIE. The short motif at 211–212 is the COPII vesicle coat-binding element; it reads FF. The COPI vesicle coat-binding motif lies at 211–219; the sequence is FFKAKKLIE.

The protein belongs to the EMP24/GP25L family. In terms of assembly, predominantly dimeric and to a lesser extent monomeric in the ER. Monomer and dimer in ERGIC and cis-Golgi network. Forms homooligomer (via GOLD domain); the assembly is promoted by direct binding with leaderless cargos and may form a protein channel that facilitates cargo entry into the ERGIC. Forms heterooligomeric complexes with other members of the p24 family such as TMED2, TMED7 and TMED9. Interacts (via GOLD domain) with TMED2 (via GOLD domain); the complex is required for export of TMED10 from the ER to the cis-Golgi network; the complex is proposed to be involved in cis-Golgi network dynamics and / or biogenesis. Associates with the COPI vesicle coat subunits (coatomer). Tetramerization of the cytoplasmic domain at the Golgi membrane in vitro; the complex is proposed to interact with COPI coatomer and induce budding of the vesicles. Interacts with COPG1; the interaction involves TMED10 homodimer. Interacts with ARF1 (GDP-bound); the interaction probably involves a TMED10 oligomer. Interacts with SEC23A, SEC24B, SEC24C and SEC24D components of the coat protein complex II/COPII, indicative of an association of TMED10 with the COPII vesicle coat. Interacts with CD59. Interacts with MPPE1/PGAP5; the complex might recruit and sort GPI-anchored proteins to the ER-exit site, or the interaction might lead to recycling of PGAP5 between the ER and the Golgi. Interacts with F2LR1/PAR2. Interacts with KDELR2/ERD2; the interaction is disrupted by KDELR2 ligand. Found in a complex composed at least of SURF4, TMED2 and TMED10. Associates with the presenilin-dependent gamma-secretase complex. Interacts with STX17; the interaction is direct. Interacts with IL-1; the interaction is direct. Interacts with RAB21 (active GTP-bound form); the interaction is indirect and regulates TMED10 abundance and localization at the Golgi.

Its subcellular location is the endoplasmic reticulum membrane. The protein localises to the endoplasmic reticulum-Golgi intermediate compartment membrane. It localises to the golgi apparatus membrane. The protein resides in the golgi apparatus. It is found in the cis-Golgi network membrane. Its subcellular location is the trans-Golgi network membrane. The protein localises to the cytoplasmic vesicle. It localises to the secretory vesicle membrane. The protein resides in the cell membrane. It is found in the melanosome. Functionally, cargo receptor involved in protein vesicular trafficking and quality control in the endoplasmic reticulum (ER) and Golgi. The p24 protein family is a group of transmembrane proteins that bind coat protein complex I/COPI and coat protein complex II/COPII involved in vesicular trafficking between the membranes. Acts at the lumenal side for incorporation of secretory cargo molecules into transport vesicles and involved in vesicle coat formation at the cytoplasmic side. Mainly functions in the early secretory pathway and cycles between the ER, ER-Golgi intermediate compartment (ERGIC) and Golgi, mediating cargo transport through COPI and COPII-coated vesicles. In COPII vesicle-mediated anterograde transport, involved in the transport of GPI-anchored proteins by acting together with TMED2 as their cargo receptor; the function specifically implies SEC24C and SEC24D of the COPII vesicle coat and lipid raft-like microdomains of the ER. Recognizes GPI anchors structural remodeled in the ER by the GPI inositol-deacylase/PGAP1 and the metallophosphoesterase MPPE1/PGAP5. In COPI vesicle-mediated retrograde transport, involved in the biogenesis of COPI vesicles and vesicle coat recruitment. Involved in trafficking of amyloid beta A4 protein and soluble APP-beta release (independent from the modulation of gamma-secretase activity). Involved in the KDELR2-mediated retrograde transport of the toxin A subunit (CTX-A-K63)together with COPI and the COOH terminus of KDELR2. On Golgi membranes, acts as a primary receptor for ARF1-GDP, a GTP-binding protein involved in COPI-vesicle formation. Increases coatomer-dependent GTPase-activating activity of ARFGAP2 which mediates the hydrolysis of ARF1-bound GTP and therefore modulates protein trafficking from the Golgi apparatus. Involved in the exocytic trafficking of G protein-coupled receptors F2LR1/PAR2 (trypsin and tryspin-like enzyme receptor), OPRM1 (opioid receptor) and P2RY4 (UTD and UDP receptor) from the Golgi to the plasma membrane, thus contributing to receptor resensitization. In addition to its cargo receptor activity, may also act as a protein channel after oligomerization, facilitating the post-translational entry of leaderless cytoplasmic cargo into the ERGIC. Involved in the translocation into ERGIC, the vesicle entry and the secretion of leaderless cargos (lacking the secretion signal sequence), including the mature form of interleukin 1/IL-1 family members, the alpha-crystallin B chain HSPB5, the carbohydrate-binding proteins galectin-1/LGALS1 and galectin-3/LGALS3, the microtubule-associated protein Tau/MAPT, and the annexin A1/ANXA1; the translocation process is dependent on cargo protein unfolding and enhanced by chaperones HSP90AB1 and HSP90B1/GRP9. Could also associates with the presenilin-dependent gamma-secretase complex in order to regulate gamma-cleavages of the amyloid beta A4 protein to yield amyloid-beta 40/Abeta40. The chain is Transmembrane emp24 domain-containing protein 10 from Mus musculus (Mouse).